We begin with the raw amino-acid sequence, 351 residues long: Thiamine-phosphate synthase (351 aa).

The segment at 1 to 128 (MKNPNIIQPE…SKIASEIRYE (128 aa)) is unknown. The thiamine-phosphate synthase stretch occupies residues 129–351 (IYTLEIEILN…IIIKELSHEN (223 aa)). 4-amino-2-methyl-5-(diphosphooxymethyl)pyrimidine-binding positions include 180-184 (QHRFK) and N212. Positions 213 and 232 each coordinate Mg(2+). 4-amino-2-methyl-5-(diphosphooxymethyl)pyrimidine is bound at residue S251. 277-279 (TLT) is a binding site for 2-[(2R,5Z)-2-carboxy-4-methylthiazol-5(2H)-ylidene]ethyl phosphate. K280 contributes to the 4-amino-2-methyl-5-(diphosphooxymethyl)pyrimidine binding site. 2-[(2R,5Z)-2-carboxy-4-methylthiazol-5(2H)-ylidene]ethyl phosphate is bound by residues G307 and 327 to 328 (VS).

This sequence belongs to the thiamine-phosphate synthase family.

It carries out the reaction 2-[(2R,5Z)-2-carboxy-4-methylthiazol-5(2H)-ylidene]ethyl phosphate + 4-amino-2-methyl-5-(diphosphooxymethyl)pyrimidine + 2 H(+) = thiamine phosphate + CO2 + diphosphate. It catalyses the reaction 2-(2-carboxy-4-methylthiazol-5-yl)ethyl phosphate + 4-amino-2-methyl-5-(diphosphooxymethyl)pyrimidine + 2 H(+) = thiamine phosphate + CO2 + diphosphate. The catalysed reaction is 4-methyl-5-(2-phosphooxyethyl)-thiazole + 4-amino-2-methyl-5-(diphosphooxymethyl)pyrimidine + H(+) = thiamine phosphate + diphosphate. Its pathway is cofactor biosynthesis; thiamine diphosphate biosynthesis; thiamine phosphate from 4-amino-2-methyl-5-diphosphomethylpyrimidine and 4-methyl-5-(2-phosphoethyl)-thiazole: step 1/1. Its function is as follows. Condenses 4-methyl-5-(beta-hydroxyethyl)thiazole monophosphate (THZ-P) and 2-methyl-4-amino-5-hydroxymethyl pyrimidine pyrophosphate (HMP-PP) to form thiamine monophosphate (TMP). The sequence is that of Thiamine-phosphate synthase from Prochlorococcus marinus subsp. pastoris (strain CCMP1986 / NIES-2087 / MED4).